Reading from the N-terminus, the 185-residue chain is MISSNDLRPGVSVEIDGAPYKVIEFLHVKPGKGAAFVRTKLKNMQTGNVVEKTFRAGEMLPAATIEKVNMQYLYSEGDNFVFMDMETYEQAPLSAAQIGSAVKYLKENMEVAILRWKGQVIDVELPNTVVLEVVETDPGVRGDTATGGTKPAKLETGAEIQVPLFIKVGERVRVDTRTDTYIGRE.

It belongs to the elongation factor P family.

It localises to the cytoplasm. The protein operates within protein biosynthesis; polypeptide chain elongation. In terms of biological role, involved in peptide bond synthesis. Stimulates efficient translation and peptide-bond synthesis on native or reconstituted 70S ribosomes in vitro. Probably functions indirectly by altering the affinity of the ribosome for aminoacyl-tRNA, thus increasing their reactivity as acceptors for peptidyl transferase. The chain is Elongation factor P from Synechococcus sp. (strain JA-3-3Ab) (Cyanobacteria bacterium Yellowstone A-Prime).